A 271-amino-acid polypeptide reads, in one-letter code: MLTKKPEINTILQATPDPHSLPAAMATEDLHVYYGDNHAIKGVDLTFPENKVTALIGPSGCGKSTYLRALNRMNDEIDGCRMEGQILYDGININRKEVDLYNVRKEIGMVFQKPNPFTKSIYENVAFGLKRHGMKNKKEIMERVEKSLRRAALWDEVKDDLGKSALSLSGGQQQRLCIARAVAMQPKVLLLDEPASALDPISTSKIEDLINELKNKYTIIIVTHNMQQAARVSDYTSFFYLGEVVEFSGTSELFTNPQQKQTEDYISGNFG.

Residues 25–266 (MATEDLHVYY…PQQKQTEDYI (242 aa)) form the ABC transporter domain. 57-64 (GPSGCGKS) provides a ligand contact to ATP.

It belongs to the ABC transporter superfamily. Phosphate importer (TC 3.A.1.7) family. As to quaternary structure, the complex is composed of two ATP-binding proteins (PstB), two transmembrane proteins (PstC and PstA) and a solute-binding protein (PstS).

The protein localises to the cell membrane. The enzyme catalyses phosphate(out) + ATP + H2O = ADP + 2 phosphate(in) + H(+). Its function is as follows. Part of the ABC transporter complex PstSACB involved in phosphate import. Responsible for energy coupling to the transport system. This is Phosphate import ATP-binding protein PstB 2 from Listeria monocytogenes serotype 4b (strain F2365).